The following is a 197-amino-acid chain: Protein GrpE (197 aa).

The segment at 1–39 (MSSKEQKTPEGQAPEEIIMDQHEEIEAVEPEASAEQVDP) is disordered.

This sequence belongs to the GrpE family. As to quaternary structure, homodimer.

It is found in the cytoplasm. Participates actively in the response to hyperosmotic and heat shock by preventing the aggregation of stress-denatured proteins, in association with DnaK and GrpE. It is the nucleotide exchange factor for DnaK and may function as a thermosensor. Unfolded proteins bind initially to DnaJ; upon interaction with the DnaJ-bound protein, DnaK hydrolyzes its bound ATP, resulting in the formation of a stable complex. GrpE releases ADP from DnaK; ATP binding to DnaK triggers the release of the substrate protein, thus completing the reaction cycle. Several rounds of ATP-dependent interactions between DnaJ, DnaK and GrpE are required for fully efficient folding. This chain is Protein GrpE, found in Escherichia coli O127:H6 (strain E2348/69 / EPEC).